Here is a 447-residue protein sequence, read N- to C-terminus: Glycerol-3-phosphate acyltransferase ATS11, chloroplastic (447 aa).

Positions 1–21 are disordered; that stretch reads MFILSSSSSLPSPLSLSSSRV. Residues 1–48 constitute a chloroplast transit peptide; the sequence is MFILSSSSSLPSPLSLSSSRVSLPPPSSSSLNLLPLSPHFQPPNLACS. An HXXXXD motif motif is present at residues 217–222; sequence HQTEAD.

Belongs to the GPAT/DAPAT family.

The protein localises to the plastid. The protein resides in the chloroplast stroma. It catalyses the reaction a fatty acyl-[ACP] + sn-glycerol 3-phosphate = a 1-acyl-sn-glycero-3-phosphate + holo-[ACP]. The enzyme catalyses sn-glycerol 3-phosphate + an acyl-CoA = a 1-acyl-sn-glycero-3-phosphate + CoA. Its pathway is phospholipid metabolism; CDP-diacylglycerol biosynthesis; CDP-diacylglycerol from sn-glycerol 3-phosphate: step 1/3. Its function is as follows. Esterifies the acyl-group from acyl-acyl carrier proteins (acyl-ACPs) to the sn-1 position of glycerol-3-phosphate. The physiological acyl donors in chloroplasts are acyl-ACPs, but acyl-CoAs are used as artificial donor for in vitro reactions. The enzyme from chilling-resistant plants discriminates against non-fluid palmitic acid and selects oleic acid whereas the enzyme from sensitive plants accepts both fatty acids. Squash is chilling-sensitive. Preferably utilizes oleoyl groups (18:1-ACP) and has lower affinity to palmitoyl (16:0-ACP) and stearoyl groups (18:0-ACP). This is Glycerol-3-phosphate acyltransferase ATS11, chloroplastic from Cucurbita moschata (Winter crookneck squash).